Here is a 176-residue protein sequence, read N- to C-terminus: NAD(P)H-quinone oxidoreductase subunit 6, chloroplastic (176 aa).

A run of 5 helical transmembrane segments spans residues 10–30 (FLLV…VLLT), 32–52 (PIFS…LYIL), 63–83 (LLIY…FMNG), 92–112 (LWTV…ISLI), and 152–172 (FFLP…GAIV).

It belongs to the complex I subunit 6 family. As to quaternary structure, NDH is composed of at least 16 different subunits, 5 of which are encoded in the nucleus.

The protein localises to the plastid. It is found in the chloroplast thylakoid membrane. It carries out the reaction a plastoquinone + NADH + (n+1) H(+)(in) = a plastoquinol + NAD(+) + n H(+)(out). The enzyme catalyses a plastoquinone + NADPH + (n+1) H(+)(in) = a plastoquinol + NADP(+) + n H(+)(out). NDH shuttles electrons from NAD(P)H:plastoquinone, via FMN and iron-sulfur (Fe-S) centers, to quinones in the photosynthetic chain and possibly in a chloroplast respiratory chain. The immediate electron acceptor for the enzyme in this species is believed to be plastoquinone. Couples the redox reaction to proton translocation, and thus conserves the redox energy in a proton gradient. The protein is NAD(P)H-quinone oxidoreductase subunit 6, chloroplastic (ndhG) of Lotus japonicus (Lotus corniculatus var. japonicus).